Reading from the N-terminus, the 218-residue chain is Small ribosomal subunit protein uS3c (218 aa).

Residues 47–118 (VQKNMRTSSG…KLNIAVTRIA (72 aa)) enclose the KH type-2 domain.

Belongs to the universal ribosomal protein uS3 family. As to quaternary structure, part of the 30S ribosomal subunit.

The protein resides in the plastid. It localises to the chloroplast. This Solanum bulbocastanum (Wild potato) protein is Small ribosomal subunit protein uS3c (rps3).